Reading from the N-terminus, the 156-residue chain is SCP2 sterol-binding domain-containing protein 1 (156 aa).

In terms of domain architecture, SCP2 spans 44 to 156; sequence TVPVFEDISQ…ERVFKDWAKW (113 aa).

The chain is SCP2 sterol-binding domain-containing protein 1 (SCP2D1) from Bos taurus (Bovine).